The primary structure comprises 301 residues: tRNA dimethylallyltransferase (301 aa).

Gly8–Thr15 contributes to the ATP binding site. Residue Thr10 to Thr15 participates in substrate binding. The segment at Asp33–Gln36 is interaction with substrate tRNA.

It belongs to the IPP transferase family. As to quaternary structure, monomer. The cofactor is Mg(2+).

The catalysed reaction is adenosine(37) in tRNA + dimethylallyl diphosphate = N(6)-dimethylallyladenosine(37) in tRNA + diphosphate. In terms of biological role, catalyzes the transfer of a dimethylallyl group onto the adenine at position 37 in tRNAs that read codons beginning with uridine, leading to the formation of N6-(dimethylallyl)adenosine (i(6)A). In Thermosipho africanus (strain TCF52B), this protein is tRNA dimethylallyltransferase.